Consider the following 205-residue polypeptide: Tumor suppressor candidate gene 1 protein homolog (205 aa).

The segment covering 1–12 (MWRMRGGATRRG) has biased composition (low complexity). The tract at residues 1 to 49 (MWRMRGGATRRGSCGGEGGGSRGESGRLGRAREGGGGGGGVGWRGRAGG) is disordered. Residues 13–23 (SCGGEGGGSRG) show a composition bias toward gly residues. The span at 24–33 (ESGRLGRARE) shows a compositional bias: basic and acidic residues. Gly residues predominate over residues 34–48 (GGGGGGGVGWRGRAG). Positions 66–110 (LEALRARDERDRQNARLREENARLRLENRRLRRENRSLFRQALRL) form a coiled coil. Disordered regions lie at residues 113–149 (DSGEREAAVETLAPDEPATNRKARGHGREEEPGSPRA) and 174–205 (GARPPGAIEEPPLQETATGLCAHDPDVPRPWL). Ser-146 carries the phosphoserine modification. Basic and acidic residues predominate over residues 196 to 205 (HDPDVPRPWL).

The chain is Tumor suppressor candidate gene 1 protein homolog (Tusc1) from Mus musculus (Mouse).